Reading from the N-terminus, the 105-residue chain is MLDKTTRINYLFDFYQELLTPKQRNYMEMYYLEDYSLGEISELFQVSRQAVYDNIKRTEAMLESYEEKLHLYSKFEQRVKLLEKLKLMTTDKHVHEHIQKLKDLD.

This sequence belongs to the UPF0122 family.

In terms of biological role, might take part in the signal recognition particle (SRP) pathway. This is inferred from the conservation of its genetic proximity to ftsY/ffh. May be a regulatory protein. In Oceanobacillus iheyensis (strain DSM 14371 / CIP 107618 / JCM 11309 / KCTC 3954 / HTE831), this protein is UPF0122 protein OB1530.